We begin with the raw amino-acid sequence, 591 residues long: MFKKNINIKIKTKILNLRKKIEMWNNNYYVKNLSLVSDEKYDSTLFELNELEKKYSMFLNTSYSNKIVAKNICNKFKKIKHLSNMLSLESIFNYKNLLNFHEKVKKNLFYNEKRYYCCELKIDGLAINLIYKNGILDSASTRGDGLQGEDVTKNALEIKSIPHILKKNNLSFPKKIEIRGEVFIKLSTFNKINKMLKSKRKKLFSNARNMASGSLRQINPKITKNRSLSFYGYGIGYVNEKKYYYDQHDALKLINSWGIPIEKNTELCKSLNEVKNFYEKSIKIRDYLDFNIDGIVVKVNSMKLQKKLGCSSKYPRWAIAYKFSSEEKCTKILGVNFNVGRTGVITPVAKLKPVYFMGTIIKYSSLHNKDIIDKLGIMINDTVCLKKSGDVIPKISRVIFEKRKNVKEIIFPKTCIFCKSKIEFCLRKKNLYCTGGFLCYAQRKQLLNHFVSREALNIKGMGNKIISQLIEKKIIKYPSDIFKLNTDKIIFLKGMGLKSSENLIKEIIKSKTTELYRVIYGIGIPNVGIYTSMNLANYYKNISNFINTSYEDLRSIKGIGSFTSNCIKKFLKDKRNISIISDLLNVNLKIK.

Residues 38-42 (DEKYD), 87-88 (SL), and E119 contribute to the NAD(+) site. The active-site N6-AMP-lysine intermediate is the K121. Positions 142, 181, 298, and 322 each coordinate NAD(+). Residues C415, C418, C433, and C439 each contribute to the Zn(2+) site.

This sequence belongs to the NAD-dependent DNA ligase family. LigA subfamily. Requires Mg(2+) as cofactor. Mn(2+) is required as a cofactor.

It catalyses the reaction NAD(+) + (deoxyribonucleotide)n-3'-hydroxyl + 5'-phospho-(deoxyribonucleotide)m = (deoxyribonucleotide)n+m + AMP + beta-nicotinamide D-nucleotide.. Its function is as follows. DNA ligase that catalyzes the formation of phosphodiester linkages between 5'-phosphoryl and 3'-hydroxyl groups in double-stranded DNA using NAD as a coenzyme and as the energy source for the reaction. It is essential for DNA replication and repair of damaged DNA. The chain is DNA ligase from Wigglesworthia glossinidia brevipalpis.